The sequence spans 118 residues: Beta-2-microglobulin (118 aa).

The signal sequence occupies residues 1-20 (MAVSAALVLLGLLSLSGLDA). Residues 25-112 (PEVQVYSRHP…HVTLTQPKIV (88 aa)) form the Ig-like C1-type domain. A disulfide bridge connects residues Cys45 and Cys99.

Belongs to the beta-2-microglobulin family. As to quaternary structure, heterodimer of an alpha chain and a beta chain. Beta-2-microglobulin is the beta-chain of major histocompatibility complex class I molecules.

The protein localises to the secreted. In terms of biological role, component of the class I major histocompatibility complex (MHC). Involved in the presentation of peptide antigens to the immune system. The sequence is that of Beta-2-microglobulin (B2M) from Ovis aries (Sheep).